The following is a 135-amino-acid chain: MNRLQLLSKGLRLIHKMSEEALAGVPLVHISPEGIFKYVMINVFDGGDASKAVIRGFADCTWHADIFEREEEVFKKLGLRAECPGGGRIEHNPEKKYLKVYGYSQGFGKADHAQTKRILATKYPDYTIEISDEGY.

Residue Lys-37 coordinates substrate. The active-site Proton acceptor is the His-63. Position 104 to 106 (104 to 106) interacts with substrate; sequence SQG.

The protein belongs to the janus family. As to expression, somatic and germline cells. Isoform B is expressed in both sexes and in somatic and germ line cells. Isoform A is expressed in males and is germ line specific.

Its function is as follows. JanA and janB regulate somatic sex differentiation. The protein is Sex-regulated protein janus-A (janA) of Drosophila melanogaster (Fruit fly).